A 595-amino-acid chain; its full sequence is Solute carrier family 13 member 1 (595 aa).

5 consecutive transmembrane segments (helical) span residues 13–33 (FLFVVFTVLVLLPLPIVLHTK), 41–61 (LFVVATFWLTEALPLSVTALL), 77–97 (VASAYFKDFHLLLIGVICLAT), 108–128 (IALKMVMMVGVNPAWLTLGFM), and 131–151 (TAFLSMWLSNTSTAAMVMPIA). Residues Asn174 and Asn207 are each glycosylated (N-linked (GlcNAc...) asparagine). 8 consecutive transmembrane segments (helical) span residues 239–259 (LTCLCIAYSSTIGGLTTITGT), 290–310 (PAALIILLLSWIWLQWLFLGF), 348–368 (IVTLVLFIIMALLWFSRDPGF), 381–401 (GFATDSTVALLIGLLFFLIPA), 464–484 (PLGSLPAWLIILISSLMVTSL), 491–511 (PATITLFLPILSPLAEAIHVN), 512–532 (PLYILIPSTLCTSFAFLLPVA), and 554–574 (GLGVNIVGVAVVMLGICTWIV). Asn591 carries an N-linked (GlcNAc...) asparagine glycan.

This sequence belongs to the SLC13A/DASS transporter (TC 2.A.47) family. NADC subfamily. Highly expressed in kidney; not detectable in the other tissues tested.

It is found in the apical cell membrane. The enzyme catalyses sulfate(out) + 3 Na(+)(out) = sulfate(in) + 3 Na(+)(in). It carries out the reaction selenate(out) + 3 Na(+)(out) = selenate(in) + 3 Na(+)(in). The catalysed reaction is thiosulfate(out) + 3 Na(+)(out) = thiosulfate(in) + 3 Na(+)(in). Its activity is regulated as follows. Inhibited by thiosulfate, selenate, molybdate, tungstate, citrate and succinate. In terms of biological role, sodium:sulfate symporter that mediates sulfate reabsorption in the kidney and small intestine. Can also mediate the transport of selenate and thiosulfate. This Homo sapiens (Human) protein is Solute carrier family 13 member 1 (SLC13A1).